The sequence spans 355 residues: Guanine nucleotide-binding protein G(i) subunit alpha-2 (355 aa).

The N-myristoyl glycine moiety is linked to residue glycine 2. Residue cysteine 3 is the site of S-palmitoyl cysteine attachment. In terms of domain architecture, G-alpha spans 32–355 (REVKLLLLGA…KNNLKDCGLF (324 aa)). The interval 35–48 (KLLLLGAGESGKST) is G1 motif. Residues 40–47 (GAGESGKS), 176–182 (LRTRVKT), 201–205 (DVGGQ), 270–273 (NKKD), and alanine 327 contribute to the GTP site. 2 residues coordinate Mg(2+): serine 47 and threonine 182. Residues 174–182 (DVLRTRVKT) form a G2 motif region. Positions 197 to 206 (FKMFDVGGQR) are G3 motif. Positions 266-273 (ILFLNKKD) are G4 motif. A G5 motif region spans residues 325 to 330 (TCATDT).

This sequence belongs to the G-alpha family. G(i/o/t/z) subfamily. G proteins are composed of 3 units; alpha, beta and gamma. The alpha chain contains the guanine nucleotide binding site.

Its subcellular location is the cytoplasm. The protein resides in the cytoskeleton. It is found in the microtubule organizing center. The protein localises to the centrosome. It localises to the cell membrane. Its function is as follows. Guanine nucleotide-binding proteins (G proteins) are involved as modulators or transducers in various transmembrane signaling systems. The G(i) proteins are involved in hormonal regulation of adenylate cyclase: they inhibit the cyclase in response to beta-adrenergic stimuli. May play a role in cell division. The chain is Guanine nucleotide-binding protein G(i) subunit alpha-2 (gnai2) from Oryzias latipes (Japanese rice fish).